The following is a 226-amino-acid chain: V-type proton ATPase subunit E (226 aa).

The protein belongs to the V-ATPase E subunit family. In terms of assembly, V-ATPase is a heteromultimeric enzyme composed of a peripheral catalytic V1 complex (components A to H) attached to an integral membrane V0 proton pore complex (components: a, c, c', c'' and d).

Subunit of the peripheral V1 complex of vacuolar ATPase essential for assembly or catalytic function. V-ATPase is responsible for acidifying a variety of intracellular compartments in eukaryotic cells. The protein is V-type proton ATPase subunit E (VATE) of Mesembryanthemum crystallinum (Common ice plant).